The following is a 223-amino-acid chain: Thiamine-phosphate synthase (223 aa).

4-amino-2-methyl-5-(diphosphooxymethyl)pyrimidine is bound by residues 37 to 41 and D72; that span reads QFREK. Residues D73 and D92 each contribute to the Mg(2+) site. Position 110 (S110) interacts with 4-amino-2-methyl-5-(diphosphooxymethyl)pyrimidine. 136-138 serves as a coordination point for 2-[(2R,5Z)-2-carboxy-4-methylthiazol-5(2H)-ylidene]ethyl phosphate; sequence TQS. K139 contacts 4-amino-2-methyl-5-(diphosphooxymethyl)pyrimidine. Residues G168 and 188–189 contribute to the 2-[(2R,5Z)-2-carboxy-4-methylthiazol-5(2H)-ylidene]ethyl phosphate site; that span reads IS.

Belongs to the thiamine-phosphate synthase family. Mg(2+) serves as cofactor.

The enzyme catalyses 2-[(2R,5Z)-2-carboxy-4-methylthiazol-5(2H)-ylidene]ethyl phosphate + 4-amino-2-methyl-5-(diphosphooxymethyl)pyrimidine + 2 H(+) = thiamine phosphate + CO2 + diphosphate. It carries out the reaction 2-(2-carboxy-4-methylthiazol-5-yl)ethyl phosphate + 4-amino-2-methyl-5-(diphosphooxymethyl)pyrimidine + 2 H(+) = thiamine phosphate + CO2 + diphosphate. It catalyses the reaction 4-methyl-5-(2-phosphooxyethyl)-thiazole + 4-amino-2-methyl-5-(diphosphooxymethyl)pyrimidine + H(+) = thiamine phosphate + diphosphate. It functions in the pathway cofactor biosynthesis; thiamine diphosphate biosynthesis; thiamine phosphate from 4-amino-2-methyl-5-diphosphomethylpyrimidine and 4-methyl-5-(2-phosphoethyl)-thiazole: step 1/1. Its function is as follows. Condenses 4-methyl-5-(beta-hydroxyethyl)thiazole monophosphate (THZ-P) and 2-methyl-4-amino-5-hydroxymethyl pyrimidine pyrophosphate (HMP-PP) to form thiamine monophosphate (TMP). The protein is Thiamine-phosphate synthase of Streptococcus agalactiae serotype III (strain NEM316).